Consider the following 299-residue polypeptide: Bifunctional protein FolD (299 aa).

Residues 168–170 (GRS), Ser193, and Ile234 contribute to the NADP(+) site.

The protein belongs to the tetrahydrofolate dehydrogenase/cyclohydrolase family. Homodimer.

The enzyme catalyses (6R)-5,10-methylene-5,6,7,8-tetrahydrofolate + NADP(+) = (6R)-5,10-methenyltetrahydrofolate + NADPH. It catalyses the reaction (6R)-5,10-methenyltetrahydrofolate + H2O = (6R)-10-formyltetrahydrofolate + H(+). Its pathway is one-carbon metabolism; tetrahydrofolate interconversion. Functionally, catalyzes the oxidation of 5,10-methylenetetrahydrofolate to 5,10-methenyltetrahydrofolate and then the hydrolysis of 5,10-methenyltetrahydrofolate to 10-formyltetrahydrofolate. This chain is Bifunctional protein FolD, found in Brucella abortus (strain S19).